The primary structure comprises 293 residues: Protease HtpX (293 aa).

The next 2 membrane-spanning stretches (helical) occupy residues isoleucine 4–leucine 24 and glycine 34–serine 54. Zn(2+) is bound at residue histidine 139. Glutamate 140 is a catalytic residue. Histidine 143 is a binding site for Zn(2+). A run of 2 helical transmembrane segments spans residues valine 158–methionine 178 and leucine 193–isoleucine 213. Glutamate 222 provides a ligand contact to Zn(2+).

Belongs to the peptidase M48B family. It depends on Zn(2+) as a cofactor.

Its subcellular location is the cell inner membrane. In Escherichia fergusonii (strain ATCC 35469 / DSM 13698 / CCUG 18766 / IAM 14443 / JCM 21226 / LMG 7866 / NBRC 102419 / NCTC 12128 / CDC 0568-73), this protein is Protease HtpX.